The chain runs to 121 residues: Large ribosomal subunit protein bL12 (121 aa).

It belongs to the bacterial ribosomal protein bL12 family. Homodimer. Part of the ribosomal stalk of the 50S ribosomal subunit. Forms a multimeric L10(L12)X complex, where L10 forms an elongated spine to which 2 to 4 L12 dimers bind in a sequential fashion. Binds GTP-bound translation factors.

Its function is as follows. Forms part of the ribosomal stalk which helps the ribosome interact with GTP-bound translation factors. Is thus essential for accurate translation. The chain is Large ribosomal subunit protein bL12 from Shewanella frigidimarina (strain NCIMB 400).